The sequence spans 831 residues: uncharacterized protein (831 aa).

His787 functions as the Tele-phosphohistidine intermediate in the catalytic mechanism.

The protein belongs to the PEP-utilizing enzyme family.

This is an uncharacterized protein from Bacillus subtilis (strain 168).